The sequence spans 641 residues: Protein zwilch (641 aa).

Ser312 carries the post-translational modification Phosphoserine.

Belongs to the ZWILCH family. Component of the RZZ complex composed of rod, Zw10 and Zwilch.

Its subcellular location is the cytoplasm. The protein resides in the chromosome. The protein localises to the centromere. It is found in the kinetochore. It localises to the cytoskeleton. Its subcellular location is the spindle. Essential component of the mitotic checkpoint, which prevents cells from prematurely exiting mitosis. Required for the assembly of the dynein-dynactin, Mad2 complexes and spindly/CG15415 onto kinetochores. Its function related to the spindle assembly machinery is proposed to depend on its association in the RZZ complex. Failure to assemble the complex due to the absence of any one of its components, results in the incorrect redistribution of the remaining components to diverse membrane compartments. The chain is Protein zwilch from Drosophila melanogaster (Fruit fly).